We begin with the raw amino-acid sequence, 853 residues long: Lysine-specific histone demethylase 1A (853 aa).

The disordered stretch occupies residues 1–177 (MLSGKKAAAA…EPEEPSGVEG (177 aa)). Positions 7–26 (AAAAAAAAAAAAAAGTEAGS) are enriched in low complexity. The residue at position 60 (T60) is a Phosphothreonine. A compositionally biased stretch (low complexity) spans 76 to 97 (AEPPGSAGPQAGPTAGPGSATP). T105 carries the post-translational modification Phosphothreonine. Positions 111–152 (TSRRKRAKVEYREMDESLANLSEDEYYSEEERNAKAEKEKKL) form a coiled coil. A phosphoserine mark is found at S127 and S132. A Phosphotyrosine modification is found at Y136. S138 carries the post-translational modification Phosphoserine. A compositionally biased stretch (basic and acidic residues) spans 139–152 (EEERNAKAEKEKKL). The segment covering 161-173 (PEEENESEPEEPS) has biased composition (acidic residues). The residue at position 167 (S167) is a Phosphoserine. One can recognise an SWIRM domain in the interval 175–274 (VEGAAFQSRL…FGIYKRIKPL (100 aa)). FAD is bound by residues S290, E309, R311, R317, and 333–334 (MV). A demethylase activity region spans residues 301-853 (FGMDVTLLEA…GVPAQQSPSM (553 aa)). Positions 429–515 (IEHWKKIVKT…EEKLQELEAN (87 aa)) form a coiled coil. An N6-acetyllysine mark is found at K433, K434, and K437. Residues K443 and K470 each participate in a glycyl lysine isopeptide (Lys-Gly) (interchain with G-Cter in SUMO2) cross-link. A Glycyl lysine isopeptide (Lys-Gly) (interchain with G-Cter in ubiquitin) cross-link involves residue K504. S612 carries the phosphoserine modification. FAD contacts are provided by residues E802 and 811–812 (TV). S850 carries the post-translational modification Phosphoserine.

It belongs to the flavin monoamine oxidase family. In terms of assembly, component of a histone demethylase complex with RCOR1. Component of a BHC histone deacetylase complex that contains HDAC1, HDAC2, HMG20B, KDM1A, RCOR1 and PHF21A. The BHC complex may also contain ZMYM2, ZNF217, ZMYM3, GSE1 and GTF2I. In the complex, RCOR1 strongly enhances the demethylase activity and protects it from the proteasome while PHF21A inhibits the demethylase activity. Interacts with the androgen receptor (AR). Component of a RCOR/GFI/KDM1A/HDAC complex. Interacts directly with GFI1 and GFI1B. Interacts with SNAI1 (via SNAG domain). Interacts with INSM1. Interacts (via AOD/Tower domain) with JADE2 (via C-terminus). Interacts with ESRRB; co-occupes the core set of ESRRB targets. Interacts with SAMD1 (via WH domain); the interaction modulates KDM1A function. Interacts with RBPJ. Interacts with L3MBTL3. Interacts with ZMYND8. It depends on FAD as a cofactor. Post-translationally, acetylated by KAT8 in epithelial but not in mesenchymal cells, thereby regulating the epithelial-to-mesenchymal transition. Acetylation by KAT8 reduces KDM1A association with nucleosomes, thereby decreasing histone H3 demethylation, leading to transcription activatio of target genes. In terms of processing, polyubiquitinated by JADE2; which leads to its proteasomal degradation. Deubiquitinated by USP38; preventing it from degradation by the 26S proteasome. Ubiquitously expressed.

It is found in the nucleus. The protein localises to the chromosome. The enzyme catalyses N(6),N(6)-dimethyl-L-lysyl(4)-[histone H3] + 2 A + 2 H2O = L-lysyl(4)-[histone H3] + 2 formaldehyde + 2 AH2. The N-terminal sequences of INSM1 and SNAI1 compete with histone H3 for the same binding site and thereby inhibit histone demethylation (in vitro). Its function is as follows. Histone demethylase that can demethylate both 'Lys-4' (H3K4me) and 'Lys-9' (H3K9me) of histone H3, thereby acting as a coactivator or a corepressor, depending on the context. Acts by oxidizing the substrate by FAD to generate the corresponding imine that is subsequently hydrolyzed. Acts as a corepressor by mediating demethylation of H3K4me, a specific tag for epigenetic transcriptional activation. Demethylates both mono- (H3K4me1) and di-methylated (H3K4me2) H3K4me. May play a role in the repression of neuronal genes. Alone, it is unable to demethylate H3K4me on nucleosomes and requires the presence of RCOR1/CoREST to achieve such activity. Also acts as a coactivator of androgen receptor (ANDR)-dependent transcription, by being recruited to ANDR target genes and mediating demethylation of H3K9me, a specific tag for epigenetic transcriptional repression. The presence of PRKCB in ANDR-containing complexes, which mediates phosphorylation of 'Thr-6' of histone H3 (H3T6ph), a specific tag that prevents demethylation H3K4me, prevents H3K4me demethylase activity of KDM1A. Demethylates di-methylated 'Lys-370' of p53/TP53 which prevents interaction of p53/TP53 with TP53BP1 and represses p53/TP53-mediated transcriptional activation. Demethylates and stabilizes the DNA methylase DNMT1. Demethylates methylated 'Lys-44' and methylated 'Lys-119' of SOX2. Required for gastrulation during embryogenesis. Component of a RCOR/GFI/KDM1A/HDAC complex that suppresses, via histone deacetylase (HDAC) recruitment, a number of genes implicated in multilineage blood cell development. Facilitates epithelial-to-mesenchymal transition by acting as an effector of SNAI1-mediated transcription repression of epithelial markers E-cadherin/CDH1, CDN7 and KRT8. Required for the maintenance of the silenced state of the SNAI1 target genes E-cadherin/CDH1 and CDN7. Required for the repression of GIPR expression. This chain is Lysine-specific histone demethylase 1A, found in Mus musculus (Mouse).